Reading from the N-terminus, the 171-residue chain is Putative lipoprotein LppO (171 aa).

The N-terminal stretch at 1–28 (MTDPRHTVRIAVGATALGVSALGATLPA) is a signal peptide. A lipid anchor (N-palmitoyl cysteine) is attached at Cys-29. The S-diacylglycerol cysteine moiety is linked to residue Cys-29.

The protein localises to the cell membrane. This Mycobacterium tuberculosis (strain CDC 1551 / Oshkosh) protein is Putative lipoprotein LppO (lppO).